A 1479-amino-acid chain; its full sequence is Tyrosine-protein kinase BAZ1B (1479 aa).

The 107-residue stretch at 20-126 (EPLFTIPHTQ…GEECDFEVGK (107 aa)) folds into the WAC domain. The tract at residues 146–212 (EAVEKKSDGA…TSLKKGERKW (67 aa)) is disordered. 2 stretches are compositionally biased toward basic and acidic residues: residues 148–165 (VEKKSDGACDSPSSDKEN) and 173–195 (LQKKETVVKEDEGRRESINDRAR). Ser-152, Ser-158, and Ser-161 each carry phosphoserine. A C motif motif is present at residues 207–213 (KGERKWA). Thr-266 is modified (phosphothreonine). Positions 302-333 (NPSTKRRNTGSPDRKPSKKPKRDSSSLSSPLN) are disordered. Phosphoserine is present on residues Ser-325, Ser-330, Ser-345, Ser-361, and Ser-374. Disordered regions lie at residues 376–433 (NNNK…KTPK) and 448–472 (TQKMTRTPRSSGGVPRSSGKPHKHL). Positions 381–396 (HSFHIPKKGPAAKKPG) are enriched in basic residues. Residues 415–425 (GQKSTGNSKSP) are compositionally biased toward polar residues. Low complexity predominate over residues 454 to 465 (TPRSSGGVPRSS). Residues 537-587 (ASMSEEQRKEYLKKKRQELKERLREKAKERREREMLERLEKQKRFEDQELG) adopt a coiled-coil conformation. The DDT domain occupies 605 to 669 (NTLFGDVALV…LQTLLQDEIA (65 aa)). A phosphoserine mark is found at Ser-706, Ser-709, and Ser-717. The stretch at 774–809 (SAELWKERLAVLKEENDKKRAEKQKRKEMEARNKEN) forms a coiled coil. Residues 789–813 (NDKKRAEKQKRKEMEARNKENGKEE) form a disordered region. Lys-827 participates in a covalent cross-link: Glycyl lysine isopeptide (Lys-Gly) (interchain with G-Cter in SUMO1); alternate. A Glycyl lysine isopeptide (Lys-Gly) (interchain with G-Cter in SUMO2); alternate cross-link involves residue Lys-827. Glycyl lysine isopeptide (Lys-Gly) (interchain with G-Cter in SUMO2) cross-links involve residues Lys-854, Lys-1043, Lys-1089, and Lys-1107. A coiled-coil region spans residues 854 to 890 (KRKREIQERETKVRLEREAEEERMRKHKAAAEKAFQE). The segment at 1184-1234 (NARCKVCRKKGEDDKLILCDECNKAFHLFCLRPALYEVPDGEWQCPACQPP) adopts a PHD-type zinc-finger fold. Positions 1231-1324 (CQPPTARRNS…SRPKDDPEVD (94 aa)) are disordered. Acidic residues predominate over residues 1254–1277 (SEGDESGEEEEEEEEEEEEEEDYE). A coiled-coil region spans residues 1257-1284 (DESGEEEEEEEEEEEEEEDYEVAGLRLR). Residues 1305–1316 (PGKKSHPARRSR) are compositionally biased toward basic residues. Ser-1315 is modified (phosphoserine). At Lys-1331 the chain carries N6-acetyllysine. Residues 1335–1439 (RRQSLELQKC…QCLLALLQKH (105 aa)) enclose the Bromo domain. A phosphoserine mark is found at Ser-1338, Ser-1464, Ser-1466, and Ser-1468. Positions 1451 to 1479 (RKFPDRLADDEGDSDSESVGQSRGRRQKK) are disordered.

Belongs to the WAL family. BAZ1B subfamily. As to quaternary structure, component of the WICH-1 ISWI chromatin remodeling complex, at least composed of SMARCA1 and BAZ1B/WSTF, which regulates the spacing of histone octamers on the DNA template to facilitate access to DNA. Within the WICH-1 ISWI chromatin remodeling complex interacts with SMARCA1; the interaction is direct. Component of the WICH-5 ISWI chromatin remodeling complex (also called the WICH complex), at least composed of SMARCA5/SNF2H and BAZ1B/WSTF, which regulates the spacing of histone octamers on the DNA template to facilitate access to DNA. Within the WICH-5 ISWI chromatin remodeling complex interacts with SMARCA5/SNF2H; the interaction is direct. Component of the B-WICH chromatin remodeling complex, at least composed of SMARCA5/SNF2H, BAZ1B/WSTF, SF3B1, DEK, MYO1C, ERCC6, MYBBP1A and DDX21. Within the B-WICH chromatin remodeling complex, interacts with SMARCA5/SNF2H, DDX21, DEK, MYBBP1A, SF3B1 and ERCC6. Interacts with MYO1C. Interacts with PCNA; the interaction is direct and is required for BAZ1B/WSTF binding to replication foci during S phase. Interacts with CDT1. The cofactor is Mn(2+).

It localises to the nucleus. The catalysed reaction is L-tyrosyl-[protein] + ATP = O-phospho-L-tyrosyl-[protein] + ADP + H(+). Atypical tyrosine-protein kinase that plays a central role in chromatin remodeling and acts as a transcription regulator. Involved in DNA damage response by phosphorylating 'Tyr-142' of histone H2AX (H2AXY142ph). H2AXY142ph plays a central role in DNA repair and acts as a mark that distinguishes between apoptotic and repair responses to genotoxic stress. Regulatory subunit of the ATP-dependent WICH-1 and WICH-5 ISWI chromatin remodeling complexes, which form ordered nucleosome arrays on chromatin and facilitate access to DNA during DNA-templated processes such as DNA replication, transcription, and repair. Both complexes regulate the spacing of nucleosomes along the chromatin and have the ability to slide mononucleosomes to the center of a DNA template. The WICH-1 ISWI chromatin remodeling complex has a lower ATP hydrolysis rate than the WICH-5 ISWI chromatin remodeling complex. The WICH-5 ISWI chromatin remodeling complex regulates the transcription of various genes, has a role in RNA polymerase I transcription. Within the B-WICH complex has a role in RNA polymerase III transcription. Mediates the recruitment of the WICH-5 ISWI chromatin remodeling complex to replication foci during DNA replication. The chain is Tyrosine-protein kinase BAZ1B (Baz1b) from Mus musculus (Mouse).